A 304-amino-acid polypeptide reads, in one-letter code: uncharacterized protein (304 aa).

A compositionally biased stretch (basic residues) spans 1–10 (MLWAHRKKRK). The disordered stretch occupies residues 1–28 (MLWAHRKKRKAATETTEDKPLESHRAND). Basic and acidic residues predominate over residues 16-27 (TEDKPLESHRAN). Ser39 carries the post-translational modification Phosphoserine. A compositionally biased stretch (polar residues) spans 91–101 (KQKISGSSMTK). 3 disordered regions span residues 91 to 115 (KQKI…SMED), 138 to 160 (SMLQ…ISPE), and 190 to 304 (SHTV…IYGS). The span at 151–160 (HAESRNISPE) shows a compositional bias: basic and acidic residues. A Phosphoserine modification is found at Ser158. Residues 195-206 (SQSRHSNQSHHS) are compositionally biased toward low complexity. Residues 208-223 (PSHQSNQSHPVYSSYQ) are compositionally biased toward polar residues. Residues 229–248 (HLSPQSYPSYSSHQSHPGHS) show a composition bias toward low complexity. The segment covering 249 to 263 (NHQGHSGLSSHQTHL) has biased composition (polar residues). Positions 264-292 (GHSNHQGHPGHSSHQSHQGQPGHPSHQSH) are enriched in low complexity.

This is an uncharacterized protein from Mus musculus (Mouse).